Reading from the N-terminus, the 241-residue chain is MPIFKCPQKSEPLWKEWDQKAQKNGLRHQVFAVNGDHYVGEWKDNVKHGKGTQVWKKNGAIYEGDWKSGKRDGYGTLSLPDQETGKYKRAYSGWWKGDKKCGYGIQFFGPKEYYEGDWCGNQRSGWGRMYYSNGDIYEGQWRNDKPEGEGMLRLKNGNRYEGNWQRGVKNGSGRFFHLDHGQLFEGFWVDDVAKCGTMIDFGRDEAPQPTQFPIPEVKILDPDGVLEEALAMFKKTKEEGD.

The segment at 6 to 35 is interaction with MDM2; sequence CPQKSEPLWKEWDQKAQKNGLRHQVFAVNG. MORN repeat units follow at residues 38 to 60, 62 to 84, 91 to 113, 114 to 136, 137 to 159, 160 to 182, and 184 to 205; these read YVGEWKDNVKHGKGTQVWKKNGA, YEGDWKSGKRDGYGTLSLPDQET, YSGWWKGDKKCGYGIQFFGPKEY, YEGDWCGNQRSGWGRMYYSNGDI, YEGQWRNDKPEGEGMLRLKNGNR, YEGNWQRGVKNGSGRFFHLDHGQ, and FEGFWVDDVAKCGTMIDFGRDE. The tract at residues 76–100 is interaction with SIRT1; that stretch reads TLSLPDQETGKYKRAYSGWWKGDKK. Residues 206-240 form an interaction with TP53 region; sequence APQPTQFPIPEVKILDPDGVLEEALAMFKKTKEEG.

As to quaternary structure, interacts with MEIG1. Interacts with TP53, MDM2 and SIRT1; the interactions mediate post-transcriptional modifications of TP53 by MDM2 and SIRT1.

Its subcellular location is the cytoplasmic vesicle. It is found in the secretory vesicle. It localises to the acrosome. Its function is as follows. Assembles a suppression complex (suppresome) by tethering SIRT1 and MDM2 to regulate composite modifications of p53/TP53. Confers both deacetylation-mediated functional inactivation, by SIRT1, and ubiquitination-dependent degradation, by MDM2, of p53/TP53, promoting a proliferative and cell survival behaviors. May play a role in the regulation of spermatogenesis. This is MORN repeat-containing protein 3 (MORN3) from Bos taurus (Bovine).